Reading from the N-terminus, the 262-residue chain is MEASQDTFTVAGRTFQSRLLVGTGKYRDLDETREAIEVSGAEIVTVAIRRTNIGQNPDEPNLLDVISPERYTLLPNTAGCYTAKDAVRTCRLARELLDGHNLVKLEVLGDEKTLYPDIPATLEAAEQLVADGFDVMVYTSDDPITAKRLEEVGCVAVMPLGAPIGSGLGIQNHWNILTIVENASVPVLVDAGVGTASDASEAMELGCDGVLMNTAIAGAQRPVLMASAMRKAVEAGREAYLAGRIPRKRFASASSPLEGTFF.

Lys104 (schiff-base intermediate with DXP) is an active-site residue. 1-deoxy-D-xylulose 5-phosphate-binding positions include Gly165, 191-192 (AG), and 213-214 (NT).

It belongs to the ThiG family. In terms of assembly, homotetramer. Forms heterodimers with either ThiH or ThiS.

It is found in the cytoplasm. It carries out the reaction [ThiS sulfur-carrier protein]-C-terminal-Gly-aminoethanethioate + 2-iminoacetate + 1-deoxy-D-xylulose 5-phosphate = [ThiS sulfur-carrier protein]-C-terminal Gly-Gly + 2-[(2R,5Z)-2-carboxy-4-methylthiazol-5(2H)-ylidene]ethyl phosphate + 2 H2O + H(+). Its pathway is cofactor biosynthesis; thiamine diphosphate biosynthesis. Functionally, catalyzes the rearrangement of 1-deoxy-D-xylulose 5-phosphate (DXP) to produce the thiazole phosphate moiety of thiamine. Sulfur is provided by the thiocarboxylate moiety of the carrier protein ThiS. In vitro, sulfur can be provided by H(2)S. This chain is Thiazole synthase, found in Alkalilimnicola ehrlichii (strain ATCC BAA-1101 / DSM 17681 / MLHE-1).